A 465-amino-acid polypeptide reads, in one-letter code: Dihydrolipoyl dehydrogenase (465 aa).

FAD-binding positions include 34–42, lysine 51, and glycine 114; that span reads EEREAGGTC. A disulfide bridge links cysteine 42 with cysteine 47. NAD(+) contacts are provided by residues 180 to 184, glutamate 203, valine 237, and 264 to 267; these read GGGVI and SIGR. FAD-binding residues include aspartate 307 and alanine 315. Histidine 439 acts as the Proton acceptor in catalysis.

The protein belongs to the class-I pyridine nucleotide-disulfide oxidoreductase family. Requires FAD as cofactor.

The protein resides in the cytoplasm. The enzyme catalyses N(6)-[(R)-dihydrolipoyl]-L-lysyl-[protein] + NAD(+) = N(6)-[(R)-lipoyl]-L-lysyl-[protein] + NADH + H(+). In terms of biological role, the branched-chain alpha-keto dehydrogenase complex catalyzes the overall conversion of alpha-keto acids to acyl-CoA and CO(2). It contains multiple copies of 3 enzymatic components: branched-chain alpha-keto acid decarboxylase (E1), lipoamide acyltransferase (E2) and lipoamide dehydrogenase (E3). In Chlamydia muridarum (strain MoPn / Nigg), this protein is Dihydrolipoyl dehydrogenase (lpdA).